The primary structure comprises 185 residues: Elongation factor P (185 aa).

Belongs to the elongation factor P family.

It is found in the cytoplasm. It participates in protein biosynthesis; polypeptide chain elongation. In terms of biological role, involved in peptide bond synthesis. Stimulates efficient translation and peptide-bond synthesis on native or reconstituted 70S ribosomes in vitro. Probably functions indirectly by altering the affinity of the ribosome for aminoacyl-tRNA, thus increasing their reactivity as acceptors for peptidyl transferase. This Symbiobacterium thermophilum (strain DSM 24528 / JCM 14929 / IAM 14863 / T) protein is Elongation factor P.